A 330-amino-acid polypeptide reads, in one-letter code: Adenylate isopentenyltransferase 8, chloroplastic (330 aa).

A chloroplast-targeting transit peptide spans 1-35 (MQNLTSTFVSPSMIPITSPRLRLPPPRSVVPMTTV). 50-57 (GATGSGKS) is an ATP binding site.

Belongs to the IPP transferase family. Expressed in roots and in immature seeds with highest expression in the chalazal endosperm.

Its subcellular location is the plastid. It is found in the chloroplast. The catalysed reaction is dimethylallyl diphosphate + ADP = N(6)-(dimethylallyl)adenosine 5'-diphosphate + diphosphate. It carries out the reaction dimethylallyl diphosphate + ATP = N(6)-(dimethylallyl)adenosine 5'-triphosphate + diphosphate. In terms of biological role, involved in cytokinin biosynthesis. Catalyzes the transfer of an isopentenyl group from dimethylallyl diphosphate (DMAPP) to ATP and ADP. The polypeptide is Adenylate isopentenyltransferase 8, chloroplastic (IPT8) (Arabidopsis thaliana (Mouse-ear cress)).